A 294-amino-acid chain; its full sequence is Cyclin-dependent kinase A-1 (294 aa).

In terms of domain architecture, Protein kinase spans 4–287; that stretch reads YEKEEKIGEG…ARQALEHEYF (284 aa). ATP-binding positions include 10–18 and lysine 33; that span reads IGEGTYGVV. Threonine 14 is modified (phosphothreonine). Position 15 is a phosphotyrosine (tyrosine 15). Residue aspartate 127 is the Proton acceptor of the active site. Threonine 161 is modified (phosphothreonine; by CAK).

This sequence belongs to the protein kinase superfamily. CMGC Ser/Thr protein kinase family. CDC2/CDKX subfamily. Phosphorylated at Thr-161 by CDKD-1. As to expression, expressed in the dividing region of the root apex and in differentiated cells such as those in the sclerenchyma, pericycle and parenchyma of the central cylinder.

The catalysed reaction is L-seryl-[protein] + ATP = O-phospho-L-seryl-[protein] + ADP + H(+). It carries out the reaction L-threonyl-[protein] + ATP = O-phospho-L-threonyl-[protein] + ADP + H(+). The enzyme catalyses [DNA-directed RNA polymerase] + ATP = phospho-[DNA-directed RNA polymerase] + ADP + H(+). This is Cyclin-dependent kinase A-1 (CDKA-1) from Oryza sativa subsp. japonica (Rice).